A 435-amino-acid polypeptide reads, in one-letter code: Probable long-chain-alcohol O-fatty-acyltransferase 11 (435 aa).

The next 11 helical transmembrane spans lie at 7-27, 36-56, 59-79, 120-140, 149-169, 200-220, 238-258, 263-283, 300-320, 363-383, and 406-426; these read NLIKVSVSVIISISYCYYVPT, FLSVLPICALFRVLPLFFASV, SGYTALFISWLANFKLILFSF, PIEVLFSNQFVTKVVILSVVL, IYPIVLFVLYPLHLYLVLEIL, DFWGHWWTLMLPTILLPDVYA, LGVFVTFLVSGALHEFLFFYI, PTGEVTLFFVLHGVCIVAYDA, CLILQVMVMGFVVVTAGWLFF, FFTGFVMRKLFNGALFFIGFV, and FFIGFVIRKLFNEAMFFIGFV.

This sequence belongs to the wax synthase family.

The protein resides in the membrane. The enzyme catalyses a long chain fatty alcohol + a fatty acyl-CoA = a wax ester + CoA. Its function is as follows. Catalyzes the final step in the synthesis of long-chain linear esters (waxes). This is Probable long-chain-alcohol O-fatty-acyltransferase 11 from Arabidopsis thaliana (Mouse-ear cress).